The chain runs to 236 residues: Biosynthetic peptidoglycan transglycosylase (236 aa).

The chain crosses the membrane as a helical span at residues 17 to 37 (IVILVALALLALPYLLTILYG).

It belongs to the glycosyltransferase 51 family.

The protein localises to the cell inner membrane. It catalyses the reaction [GlcNAc-(1-&gt;4)-Mur2Ac(oyl-L-Ala-gamma-D-Glu-L-Lys-D-Ala-D-Ala)](n)-di-trans,octa-cis-undecaprenyl diphosphate + beta-D-GlcNAc-(1-&gt;4)-Mur2Ac(oyl-L-Ala-gamma-D-Glu-L-Lys-D-Ala-D-Ala)-di-trans,octa-cis-undecaprenyl diphosphate = [GlcNAc-(1-&gt;4)-Mur2Ac(oyl-L-Ala-gamma-D-Glu-L-Lys-D-Ala-D-Ala)](n+1)-di-trans,octa-cis-undecaprenyl diphosphate + di-trans,octa-cis-undecaprenyl diphosphate + H(+). Its pathway is cell wall biogenesis; peptidoglycan biosynthesis. In terms of biological role, peptidoglycan polymerase that catalyzes glycan chain elongation from lipid-linked precursors. In Rhodopseudomonas palustris (strain ATCC BAA-98 / CGA009), this protein is Biosynthetic peptidoglycan transglycosylase.